The following is a 105-amino-acid chain: Large ribosomal subunit protein uL24 (105 aa).

The protein belongs to the universal ribosomal protein uL24 family. Part of the 50S ribosomal subunit.

One of two assembly initiator proteins, it binds directly to the 5'-end of the 23S rRNA, where it nucleates assembly of the 50S subunit. Its function is as follows. One of the proteins that surrounds the polypeptide exit tunnel on the outside of the subunit. The chain is Large ribosomal subunit protein uL24 from Saccharophagus degradans (strain 2-40 / ATCC 43961 / DSM 17024).